Consider the following 288-residue polypeptide: SUR7 family protein pun1 (288 aa).

At Met-1 to Leu-11 the chain is on the cytoplasmic side. Residues Phe-12–Ile-32 traverse the membrane as a helical segment. 7 N-linked (GlcNAc...) asparagine glycosylation sites follow: Asn-33, Asn-50, Asn-59, Asn-66, Asn-122, Asn-153, and Asn-160. Over Asn-33–Tyr-185 the chain is Extracellular. The helical transmembrane segment at Ile-186–Phe-206 threads the bilayer. Topologically, residues Phe-207–Leu-210 are cytoplasmic. The chain crosses the membrane as a helical span at residues Phe-211–Val-231. Over Ala-232–Lys-257 the chain is Extracellular. The chain crosses the membrane as a helical span at residues Ile-258–Ile-278. Residues Gly-279–Leu-288 lie on the Cytoplasmic side of the membrane.

The protein belongs to the SUR7 family.

It is found in the golgi apparatus membrane. The protein localises to the cell membrane. It localises to the cell tip. Contributes to the wild-type cellular response to nitrogen stress through signaling pathways that regulate the expression of genes involved in amino acid biosynthesis. Required for wild-type filamentous growth, cell growth, and cell-cell adhesion. This chain is SUR7 family protein pun1 (pun1), found in Schizosaccharomyces pombe (strain 972 / ATCC 24843) (Fission yeast).